The sequence spans 100 residues: Protein RADIALIS-like 1 (100 aa).

The 56-residue stretch at 9–64 folds into the SANT domain; sequence QSSGSWTAKQNKAFEQALATYDQDTPNRWQNVAKVVGGKTTEEVKRHYELLVQDIN. Residues 73 to 100 are disordered; that stretch reads FPNYRTSGGCTNGRLSQEEKRMRNMRLQ. Residues 76–87 are compositionally biased toward polar residues; it reads YRTSGGCTNGRL.

Its subcellular location is the nucleus. Probable transcription factor. This Arabidopsis thaliana (Mouse-ear cress) protein is Protein RADIALIS-like 1 (RL1).